Reading from the N-terminus, the 80-residue chain is Exodeoxyribonuclease 7 small subunit (80 aa).

It belongs to the XseB family. As to quaternary structure, heterooligomer composed of large and small subunits.

It localises to the cytoplasm. The catalysed reaction is Exonucleolytic cleavage in either 5'- to 3'- or 3'- to 5'-direction to yield nucleoside 5'-phosphates.. Its function is as follows. Bidirectionally degrades single-stranded DNA into large acid-insoluble oligonucleotides, which are then degraded further into small acid-soluble oligonucleotides. The polypeptide is Exodeoxyribonuclease 7 small subunit (Citrobacter koseri (strain ATCC BAA-895 / CDC 4225-83 / SGSC4696)).